Consider the following 1824-residue polypeptide: Treslin (1824 aa).

Disordered regions lie at residues 542-572 (EFYQSSTAGSSGSLRSKKRGTQCTPVRQKMK), 590-622 (AQKTQGDSGSAGSGKGTEKGGKKSSGDRTKPGL), 907-973 (SPSK…SGES), 1001-1035 (RHSSVFYSSSQPRSRNLDRVVSSSQLSHSEGKGKF), 1098-1117 (AVGCRTPQSPRTPNRTVGDN), 1189-1221 (VPENQVNVPDSPVFAKRHSPRLVTPGKNSSPEE), 1293-1388 (PFCN…DDDK), 1459-1518 (FEGK…QSSP), 1617-1650 (TPTHHPTSSQSPLASPLTPSPQSRGWPTPENLNS), and 1803-1824 (PLCQPRRRRTPSRTYSRKKLLD). Residues 546–555 (SSTAGSSGSL) are compositionally biased toward low complexity. Residues 562–572 (TQCTPVRQKMK) are compositionally biased toward polar residues. Positions 605–619 (GTEKGGKKSSGDRTK) are enriched in basic and acidic residues. The segment covering 907–921 (SPSKKSKMPRSQSVS) has biased composition (polar residues). Positions 932–952 (SDVDNDDRHTLLTKKVSETPL) are enriched in basic and acidic residues. Polar residues-rich tracts occupy residues 1005-1014 (VFYSSSQPRS) and 1103-1114 (TPQSPRTPNRTV). Residues 1319-1345 (RSGNTPVKESCSPSSNSQGITGTSPSP) are compositionally biased toward polar residues. A compositionally biased stretch (low complexity) spans 1347–1370 (KSLSSAVAKSSPSPSFGPSRSGVG). Polar residues predominate over residues 1462–1472 (KQTTSTGTPLT). Residues 1480-1490 (TPDRRQREAEA) show a composition bias toward basic and acidic residues. Polar residues-rich tracts occupy residues 1617–1629 (TPTHHPTSSQSPL) and 1636–1650 (SPQSRGWPTPENLNS). The segment covering 1807 to 1824 (PRRRRTPSRTYSRKKLLD) has biased composition (basic residues).

This sequence belongs to the treslin family. Interacts with topbp1 (via BRCT domains); interaction takes place in a cdk2-dependent manner. Component of the replisome complex.

It localises to the nucleus. Regulator of DNA replication and S/M and G2/M checkpoints. Regulates the triggering of DNA replication initiation via its interaction with topbp1 by participating in cdk2-mediated loading of cdc45l onto replication origins. Required for the transition from pre-replication complex (pre-RC) to pre-initiation complex (pre-IC). Required to prevent mitotic entry after treatment with ionizing radiation. In Danio rerio (Zebrafish), this protein is Treslin (ticrr).